We begin with the raw amino-acid sequence, 1153 residues long: Protein unc-13 homolog 4B (1153 aa).

Residues 54–84 (VLKSSLAPLEENGSGGEEDSDESPDGTLQLS) form a disordered region. Residues 162–288 (ATHEEIYEAA…MKEIAVTASS (127 aa)) form the C2 1 domain. D195, D201, D252, F253, and D254 together coordinate Ca(2+). The MHD1 domain occupies 637-755 (FEVYLILKRY…RCCIFYAQQM (119 aa)). One can recognise an MHD2 domain in the interval 869–975 (SNSMDQLMMY…LETSDLIHQY (107 aa)). The C2 2 domain maps to 990 to 1114 (PYGQLTITAQ…EATPPGEQIM (125 aa)). Ca(2+) is bound by residues D1019, D1025, D1083, and D1085.

This sequence belongs to the unc-13 family. As to quaternary structure, interacts with Cam. Requires Ca(2+) as cofactor.

Its subcellular location is the cytoplasm. The protein resides in the cytoskeleton. It is found in the cell projection. The protein localises to the filopodium. It localises to the late endosome. Its subcellular location is the lysosome. Its function is as follows. Essential for tracheal development in embryos. Functions with the GTPase Rab39 and downstream of dnd, to regulate lumen fusion between previously separate tracheal branches (anastomosis). Essential component of secretory lysosome-related organelles (SLs) that are present in the tracheal fusion tip cells (FCs). Mediates intracellular fusion of the extending tracheal stalk cell lumen in the FCs by recruiting the SNARE complex component Syx1A to the SLs, this may then enable the SLs to interact with complementary SNAREs (such as Syb) present in the apical membrane of the FC-FC interface and the membranes of the separate tracheal stalk cells. May also function in the maturation and exocytosis of the SLs. The protein is Protein unc-13 homolog 4B of Drosophila melanogaster (Fruit fly).